Here is a 73-residue protein sequence, read N- to C-terminus: Toxin Td4 (73 aa).

Positions 1-7 (IGMVVEC) are cleaved as a signal peptide. Positions 8 to 70 (KDGYLVGNDG…TWDRATNRCG (63 aa)) constitute an LCN-type CS-alpha/beta domain. 4 cysteine pairs are disulfide-bonded: cysteine 18–cysteine 69, cysteine 22–cysteine 44, cysteine 30–cysteine 50, and cysteine 34–cysteine 52. Arginine 71 is modified (arginine amide).

It belongs to the long (4 C-C) scorpion toxin superfamily. Sodium channel inhibitor family. Beta subfamily. In terms of tissue distribution, expressed by the venom gland.

The protein resides in the secreted. In terms of biological role, beta toxins bind voltage-independently at site-4 of sodium channels (Nav) and shift the voltage of activation toward more negative potentials thereby affecting sodium channel activation and promoting spontaneous and repetitive firing. This Tityus discrepans (Venezuelan scorpion) protein is Toxin Td4.